A 261-amino-acid chain; its full sequence is 5'-nucleotidase SurE (261 aa).

Positions 8, 9, 39, and 94 each coordinate a divalent metal cation.

It belongs to the SurE nucleotidase family. The cofactor is a divalent metal cation.

Its subcellular location is the cytoplasm. It carries out the reaction a ribonucleoside 5'-phosphate + H2O = a ribonucleoside + phosphate. Nucleotidase that shows phosphatase activity on nucleoside 5'-monophosphates. The chain is 5'-nucleotidase SurE from Methanopyrus kandleri (strain AV19 / DSM 6324 / JCM 9639 / NBRC 100938).